The following is a 108-amino-acid chain: Protein YcgL (108 aa).

The 85-residue stretch at 12–96 (MFCVIYRSSK…PPEDLLKQHL (85 aa)) folds into the YcgL domain.

In Escherichia coli (strain K12 / MC4100 / BW2952), this protein is Protein YcgL.